The chain runs to 263 residues: Linear gramicidin dehydrogenase LgrE (263 aa).

S96 is a catalytic residue.

The protein belongs to the thioesterase family.

Its function is as follows. In the final step of gramicidin biosynthesis, reduces the pentadecapeptide-aldehyde intermediate, that is released from the terminal module of the non-ribosomal peptide synthetase LgrD, to the final product ethanolamine-containing gramicidin. The chain is Linear gramicidin dehydrogenase LgrE (lgrE) from Brevibacillus parabrevis.